Consider the following 344-residue polypeptide: DNA-directed RNA polymerase subunit alpha (344 aa).

The segment at 1–246 is alpha N-terminal domain (alpha-NTD); that stretch reads MPVEKFLKDF…EFLFPLIDFE (246 aa). The interval 259 to 344 is alpha C-terminal domain (alpha-CTD); that stretch reads ESSNLLDMSI…VLSKNVKISE (86 aa).

The protein belongs to the RNA polymerase alpha chain family. In terms of assembly, homodimer. The RNAP catalytic core consists of 2 alpha, 1 beta, 1 beta' and 1 omega subunit. When a sigma factor is associated with the core the holoenzyme is formed, which can initiate transcription.

The catalysed reaction is RNA(n) + a ribonucleoside 5'-triphosphate = RNA(n+1) + diphosphate. DNA-dependent RNA polymerase catalyzes the transcription of DNA into RNA using the four ribonucleoside triphosphates as substrates. This is DNA-directed RNA polymerase subunit alpha from Borrelia garinii subsp. bavariensis (strain ATCC BAA-2496 / DSM 23469 / PBi) (Borreliella bavariensis).